The primary structure comprises 432 residues: Adenylosuccinate synthetase 2 (432 aa).

Residues 13-19 (GDEGKGK) and 41-43 (GHT) each bind GTP. Asp-14 serves as the catalytic Proton acceptor. Mg(2+) contacts are provided by Asp-14 and Gly-41. Residues 14-17 (DEGK), 39-42 (NAGH), Thr-130, Arg-144, Gln-225, Thr-240, and Arg-304 each bind IMP. Catalysis depends on His-42, which acts as the Proton donor. 300 to 306 (ATTGRSR) is a substrate binding site. Residues Arg-306, 332–334 (KLD), and 415–417 (STG) each bind GTP.

The protein belongs to the adenylosuccinate synthetase family. In terms of assembly, homodimer. Mg(2+) is required as a cofactor.

The protein resides in the cytoplasm. It carries out the reaction IMP + L-aspartate + GTP = N(6)-(1,2-dicarboxyethyl)-AMP + GDP + phosphate + 2 H(+). Its pathway is purine metabolism; AMP biosynthesis via de novo pathway; AMP from IMP: step 1/2. Functionally, plays an important role in the de novo pathway of purine nucleotide biosynthesis. Catalyzes the first committed step in the biosynthesis of AMP from IMP. This is Adenylosuccinate synthetase 2 from Photorhabdus laumondii subsp. laumondii (strain DSM 15139 / CIP 105565 / TT01) (Photorhabdus luminescens subsp. laumondii).